The chain runs to 46 residues: Defensin Tk-AMP-D5 (46 aa).

Intrachain disulfides connect Cys3-Cys46, Cys14-Cys34, Cys20-Cys40, and Cys24-Cys42.

Functionally, plant defense peptide. The chain is Defensin Tk-AMP-D5 from Triticum kiharae (Wheat).